We begin with the raw amino-acid sequence, 673 residues long: Bifunctional lycopene cyclase/phytoene synthase (673 aa).

A lycopene beta-cyclase region spans residues 1–251 (MTALAYYQIH…IVLGLSACDH (251 aa)). Helical transmembrane passes span 9 to 29 (IHLI…SPIL), 36 to 56 (KISI…SWII), 81 to 101 (YEEY…YVLA), 117 to 137 (SALS…LFTA), 157 to 177 (LSLL…EYAF), 187 to 207 (TIAA…VAVG), and 226 to 246 (VLPI…VLGL). The interval 258 to 673 (LHGRTIYGNK…SVVMSGWEGQ (416 aa)) is phytoene synthase. The interval 376 to 399 (KILSSPLLPPSHPSRPTGMYPLPP) is disordered.

It in the N-terminal section; belongs to the lycopene beta-cyclase family. The protein in the C-terminal section; belongs to the phytoene/squalene synthase family.

The protein resides in the membrane. The catalysed reaction is all-trans-lycopene = gamma-carotene. It catalyses the reaction gamma-carotene = all-trans-beta-carotene. It carries out the reaction 2 (2E,6E,10E)-geranylgeranyl diphosphate = 15-cis-phytoene + 2 diphosphate. The protein operates within carotenoid biosynthesis; beta-carotene biosynthesis. It participates in carotenoid biosynthesis; phytoene biosynthesis; all-trans-phytoene from geranylgeranyl diphosphate: step 1/1. Functionally, bifunctional enzyme that catalyzes the reactions from geranylgeranyl diphosphate to phytoene (phytoene synthase) and lycopene to beta-carotene via the intermediate gamma-carotene (lycopene cyclase). The cyclase preferentially catalyzes the symmetric cyclization of both ends of the substrate to produce dicyclic carotenoids. Beta-carotene is further processed to the acidic carotenoid astaxanthin. This is Bifunctional lycopene cyclase/phytoene synthase from Phaffia rhodozyma (Yeast).